Reading from the N-terminus, the 446-residue chain is tRNA wybutosine-synthesizing protein 2 homolog (446 aa).

S-adenosyl-L-methionine-binding positions include serine 208, lysine 215, glutamate 255, and 283 to 284 (DN).

It belongs to the class I-like SAM-binding methyltransferase superfamily. TRM5/TYW2 family.

The catalysed reaction is 4-demethylwyosine(37) in tRNA(Phe) + S-adenosyl-L-methionine = 4-demethyl-7-[(3S)-3-amino-3-carboxypropyl]wyosine(37) in tRNA(Phe) + S-methyl-5'-thioadenosine + H(+). Its pathway is tRNA modification; wybutosine-tRNA(Phe) biosynthesis. S-adenosyl-L-methionine-dependent transferase that acts as a component of the wybutosine biosynthesis pathway. Wybutosine is a hyper modified guanosine with a tricyclic base found at the 3'-position adjacent to the anticodon of eukaryotic phenylalanine tRNA. Catalyzes the transfer of the alpha-amino-alpha-carboxypropyl (acp) group from S-adenosyl-L-methionine to the C-7 position of 4-demethylwyosine (imG-14) to produce wybutosine-86. The sequence is that of tRNA wybutosine-synthesizing protein 2 homolog (Trmt12) from Mus musculus (Mouse).